The primary structure comprises 87 residues: Small ribosomal subunit protein uS17 (87 aa).

This sequence belongs to the universal ribosomal protein uS17 family. Part of the 30S ribosomal subunit.

Functionally, one of the primary rRNA binding proteins, it binds specifically to the 5'-end of 16S ribosomal RNA. The protein is Small ribosomal subunit protein uS17 of Bacillus velezensis (strain DSM 23117 / BGSC 10A6 / LMG 26770 / FZB42) (Bacillus amyloliquefaciens subsp. plantarum).